Reading from the N-terminus, the 148-residue chain is Deoxyuridine 5'-triphosphate nucleotidohydrolase (148 aa).

Substrate is bound by residues 67-69 (RSG), N80, 84-86 (LID), and M94.

It belongs to the dUTPase family. The cofactor is Mg(2+).

It carries out the reaction dUTP + H2O = dUMP + diphosphate + H(+). It functions in the pathway pyrimidine metabolism; dUMP biosynthesis; dUMP from dCTP (dUTP route): step 2/2. This enzyme is involved in nucleotide metabolism: it produces dUMP, the immediate precursor of thymidine nucleotides and it decreases the intracellular concentration of dUTP so that uracil cannot be incorporated into DNA. The polypeptide is Deoxyuridine 5'-triphosphate nucleotidohydrolase (Burkholderia ambifaria (strain ATCC BAA-244 / DSM 16087 / CCUG 44356 / LMG 19182 / AMMD) (Burkholderia cepacia (strain AMMD))).